The sequence spans 336 residues: UDP-3-O-acylglucosamine N-acyltransferase (336 aa).

Residue histidine 233 is the Proton acceptor of the active site.

The protein belongs to the transferase hexapeptide repeat family. LpxD subfamily. In terms of assembly, homotrimer.

The enzyme catalyses a UDP-3-O-[(3R)-3-hydroxyacyl]-alpha-D-glucosamine + a (3R)-hydroxyacyl-[ACP] = a UDP-2-N,3-O-bis[(3R)-3-hydroxyacyl]-alpha-D-glucosamine + holo-[ACP] + H(+). It functions in the pathway bacterial outer membrane biogenesis; LPS lipid A biosynthesis. In terms of biological role, catalyzes the N-acylation of UDP-3-O-acylglucosamine using 3-hydroxyacyl-ACP as the acyl donor. Is involved in the biosynthesis of lipid A, a phosphorylated glycolipid that anchors the lipopolysaccharide to the outer membrane of the cell. This chain is UDP-3-O-acylglucosamine N-acyltransferase, found in Helicobacter pylori (strain J99 / ATCC 700824) (Campylobacter pylori J99).